We begin with the raw amino-acid sequence, 464 residues long: Protein FAM90A22 (464 aa).

Disordered stretches follow at residues 1–43, 70–389, and 415–437; these read MMAR…PRLK, PATL…HDGA, and HSPE…SEAP. Composition is skewed to basic and acidic residues over residues 74–89 and 97–114; these read GKKE…KPRA and NKDK…DPQR. The span at 182–197 shows a compositional bias: low complexity; the sequence is SLSPLRKTSLSSSSSL.

Belongs to the FAM90 family.

The protein is Protein FAM90A22 of Homo sapiens (Human).